The primary structure comprises 343 residues: GTPase Obg (343 aa).

Positions 1–159 constitute an Obg domain; the sequence is MKYIDEVKIQ…FELKLELRVL (159 aa). An OBG-type G domain is found at 160–334; sequence ADVGLLGLPN…LTYAIMGYLE (175 aa). Residues 166 to 173, 191 to 195, 213 to 216, 284 to 287, and 315 to 317 each bind GTP; these read GLPNAGKS, FTTLY, DIPG, NKVD, and SAL. Residues Ser-173 and Thr-193 each contribute to the Mg(2+) site.

The protein belongs to the TRAFAC class OBG-HflX-like GTPase superfamily. OBG GTPase family. Monomer. Requires Mg(2+) as cofactor.

It is found in the cytoplasm. Functionally, an essential GTPase which binds GTP, GDP and possibly (p)ppGpp with moderate affinity, with high nucleotide exchange rates and a fairly low GTP hydrolysis rate. Plays a role in control of the cell cycle, stress response, ribosome biogenesis and in those bacteria that undergo differentiation, in morphogenesis control. In Nitrosomonas eutropha (strain DSM 101675 / C91 / Nm57), this protein is GTPase Obg.